Consider the following 856-residue polypeptide: Serine/threonine-protein kinase unc-51 (856 aa).

Positions tyrosine 9–leucine 275 constitute a Protein kinase domain. ATP-binding positions include leucine 15–valine 23 and lysine 39. Aspartate 134 acts as the Proton acceptor in catalysis. A disordered region spans residues proline 304 to arginine 327. An LIR motif is present at residues phenylalanine 358 to leucine 361. Disordered stretches follow at residues proline 362–valine 391, leucine 405–threonine 471, and proline 520–proline 582. Positions glutamine 365–threonine 385 are enriched in polar residues. Positions threonine 411–glutamine 436 are enriched in low complexity. Polar residues-rich tracts occupy residues isoleucine 527 to isoleucine 536 and lysine 566 to alanine 578. The required for interaction with unc-14 and vab-8 stretch occupies residues tyrosine 750–threonine 856.

It belongs to the protein kinase superfamily. Ser/Thr protein kinase family. APG1/unc-51/ULK1 subfamily. In terms of assembly, interacts with unc-14 and vab-8. Interacts (via C-terminus) with atg-13. Interacts (via the LIR motif) with lgg-1; the interaction is direct. Requires Mg(2+) as cofactor.

It catalyses the reaction L-seryl-[protein] + ATP = O-phospho-L-seryl-[protein] + ADP + H(+). The enzyme catalyses L-threonyl-[protein] + ATP = O-phospho-L-threonyl-[protein] + ADP + H(+). Functionally, protein kinase important for axonal elongation and axonal guidance. Functions in the CAN axons to direct both anterior and posterior migrations. Phosphorylates both unc-14 and vab-8. Component of the unc-51/atg-13 complex that is probably recruited by lgg-1 to preautophagosomes and is required for autophagosome formation. Interaction with autophagy related proteins such as atg-13 links it to the autophagy machinery to in turn promote P-granule degradation in somatic cells. Plays a role in mitophagy during limited food availability. Regulates cell size. Plays a role in male tail ray pattern formation. May be required for normal dauer morphogenesis. This is Serine/threonine-protein kinase unc-51 from Caenorhabditis elegans.